Reading from the N-terminus, the 254-residue chain is Type III pantothenate kinase (254 aa).

6 to 13 (DLGNSAIK) is an ATP binding site. Substrate is bound by residues Tyr99 and 106–109 (GVDR). Catalysis depends on Asp108, which acts as the Proton acceptor. A K(+)-binding site is contributed by Asp128. An ATP-binding site is contributed by Thr131. A substrate-binding site is contributed by Thr182.

This sequence belongs to the type III pantothenate kinase family. Homodimer. It depends on NH4(+) as a cofactor. K(+) serves as cofactor.

It localises to the cytoplasm. It catalyses the reaction (R)-pantothenate + ATP = (R)-4'-phosphopantothenate + ADP + H(+). It functions in the pathway cofactor biosynthesis; coenzyme A biosynthesis; CoA from (R)-pantothenate: step 1/5. In terms of biological role, catalyzes the phosphorylation of pantothenate (Pan), the first step in CoA biosynthesis. The chain is Type III pantothenate kinase from Halorhodospira halophila (strain DSM 244 / SL1) (Ectothiorhodospira halophila (strain DSM 244 / SL1)).